The chain runs to 263 residues: Endonuclease 8 (263 aa).

Proline 2 serves as the catalytic Schiff-base intermediate with DNA. Glutamate 3 functions as the Proton donor in the catalytic mechanism. Catalysis depends on lysine 53, which acts as the Proton donor; for beta-elimination activity. Glutamine 70, arginine 125, and asparagine 169 together coordinate DNA. The segment at lysine 229 to lysine 263 adopts an FPG-type zinc-finger fold. Arginine 253 functions as the Proton donor; for delta-elimination activity in the catalytic mechanism.

This sequence belongs to the FPG family. Requires Zn(2+) as cofactor.

It catalyses the reaction 2'-deoxyribonucleotide-(2'-deoxyribose 5'-phosphate)-2'-deoxyribonucleotide-DNA = a 3'-end 2'-deoxyribonucleotide-(2,3-dehydro-2,3-deoxyribose 5'-phosphate)-DNA + a 5'-end 5'-phospho-2'-deoxyribonucleoside-DNA + H(+). Functionally, involved in base excision repair of DNA damaged by oxidation or by mutagenic agents. Acts as a DNA glycosylase that recognizes and removes damaged bases. Has a preference for oxidized pyrimidines, such as thymine glycol, 5,6-dihydrouracil and 5,6-dihydrothymine. Has AP (apurinic/apyrimidinic) lyase activity and introduces nicks in the DNA strand. Cleaves the DNA backbone by beta-delta elimination to generate a single-strand break at the site of the removed base with both 3'- and 5'-phosphates. The chain is Endonuclease 8 from Enterobacter sp. (strain 638).